An 877-amino-acid polypeptide reads, in one-letter code: Lipophilic envelope-spanning tunnel protein B (877 aa).

Residues 1-19 lie on the Cytoplasmic side of the membrane; it reads MSQETPASTTEAQIKNKRR. A helical membrane pass occupies residues 20-40; sequence ISPFWLLPFIALMIASWLIWD. At 41-877 the chain is on the periplasmic side; sequence SYQDRGNTVT…WREWGTALPK (837 aa). 7 MCE/MlaD regions span residues 46-149, 160-272, 279-382, 391-499, 515-625, 634-737, and 746-862; these read GNTV…VALD, DLMI…GLYE, RGVI…VVPG, DVLT…PLYA, TTVS…ILYA, GGQI…LQEA, and DGLS…LLQE.

This sequence belongs to the PqiB family. In terms of assembly, homohexamer. May interact with LetA in the inner membrane. May also interact with partners in the outer membrane.

It localises to the cell inner membrane. Functionally, forms a tunnel that spans the entire periplasmic space. Is probably involved in the transport of lipids between the inner membrane and the outer membrane through the tunnel. Forms a dynamic tunnel sufficiently long to mediate lipid transport directly between the two membranes without the need for a shuttle protein. Binds phospholipids. Lipids bind inside the tunnel. Required for outer membrane homeostasis. Contributes to membrane integrity. This is Lipophilic envelope-spanning tunnel protein B from Escherichia coli (strain K12).